Here is a 344-residue protein sequence, read N- to C-terminus: Phosphoribosylformylglycinamidine cyclo-ligase (344 aa).

This sequence belongs to the AIR synthase family.

Its subcellular location is the cytoplasm. The catalysed reaction is 2-formamido-N(1)-(5-O-phospho-beta-D-ribosyl)acetamidine + ATP = 5-amino-1-(5-phospho-beta-D-ribosyl)imidazole + ADP + phosphate + H(+). It functions in the pathway purine metabolism; IMP biosynthesis via de novo pathway; 5-amino-1-(5-phospho-D-ribosyl)imidazole from N(2)-formyl-N(1)-(5-phospho-D-ribosyl)glycinamide: step 2/2. In Neisseria meningitidis serogroup C / serotype 2a (strain ATCC 700532 / DSM 15464 / FAM18), this protein is Phosphoribosylformylglycinamidine cyclo-ligase.